Here is an 836-residue protein sequence, read N- to C-terminus: Ethylene receptor 3 (836 aa).

3 consecutive transmembrane segments (helical) span residues leucine 137–arginine 157, leucine 166–threonine 186, and leucine 204–leucine 224. 2 residues coordinate Cu cation: cysteine 176 and histidine 180. Residues aspartate 269 to leucine 413 form the GAF domain. The stretch at alanine 416 to alanine 452 forms a coiled coil. Positions methionine 457–proline 691 constitute a Histidine kinase domain. One can recognise a Response regulatory domain in the interval leucine 718–glutamine 834.

The protein belongs to the ethylene receptor family. Cu cation serves as cofactor.

The protein localises to the endoplasmic reticulum membrane. The catalysed reaction is ATP + protein L-histidine = ADP + protein N-phospho-L-histidine.. Its function is as follows. Ethylene receptor related to bacterial two-component regulators. Acts as a negative regulator of ethylene signaling. May delay the transition from the vegetative stage to the floral stage by up-regulating GI (GIGANTEA) and RCN1 and cause starch accumulation in stems by down-regulating the alpha-amylase AMY3D. The sequence is that of Ethylene receptor 3 from Oryza sativa subsp. indica (Rice).